A 126-amino-acid chain; its full sequence is Antimicrobial protein 1 (126 aa).

The N-terminal stretch at 1 to 24 (MRSSLLLGLTVVLLLGVTVPPCMA) is a signal peptide.

In terms of tissue distribution, strongly expressed in gills, hemocytes and reproductive tract, with weaker expression in muscle, heart and digestive tract. Not detected in eyes and hepatopancreas (at protein level).

The protein localises to the secreted. Has antibacterial activity against the Gram-positive bacteria E.coli (MIC&lt;50 ug/ml) and P.aeruginosa (MIC&lt;25 ug/ml), and the Gram-negative bacteria S.aureus (MIC&lt;100 ug/ml) and S.pyogenes (MIC&lt;50 ug/ml). This is Antimicrobial protein 1 from Scylla serrata (Mud crab).